The primary structure comprises 390 residues: 8-amino-7-oxononanoate synthase (390 aa).

A substrate-binding site is contributed by Arg19. 106–107 (GY) is a binding site for pyridoxal 5'-phosphate. Substrate is bound at residue His131. Pyridoxal 5'-phosphate contacts are provided by Ser176, His204, and Thr233. The residue at position 236 (Lys236) is an N6-(pyridoxal phosphate)lysine. Residue Thr350 participates in substrate binding.

This sequence belongs to the class-II pyridoxal-phosphate-dependent aminotransferase family. BioF subfamily. Homodimer. The cofactor is pyridoxal 5'-phosphate.

It catalyses the reaction 6-carboxyhexanoyl-[ACP] + L-alanine + H(+) = (8S)-8-amino-7-oxononanoate + holo-[ACP] + CO2. The protein operates within cofactor biosynthesis; biotin biosynthesis. Catalyzes the decarboxylative condensation of pimeloyl-[acyl-carrier protein] and L-alanine to produce 8-amino-7-oxononanoate (AON), [acyl-carrier protein], and carbon dioxide. This Pseudomonas putida (strain ATCC 700007 / DSM 6899 / JCM 31910 / BCRC 17059 / LMG 24140 / F1) protein is 8-amino-7-oxononanoate synthase.